A 318-amino-acid polypeptide reads, in one-letter code: MASVQRKSWCALTIRLLGRTEIRRLAKELEFRPRKSLGQNFVHDANTVRRVVSTSGVSRSDHVLEVGPGLGSLTLALLDRGAHVTAVEIDPVLAERLPHTVAEHSHSEIQRLTVLNRDVLTLRRDELAEPPTAVVANLPYNVAVPALLHLLAEFPSIRTVTVMVQAEVAERLAAEPGGKEYGVPSVKVRFFGRVRRCGMVSPTVFWPIPRVYSGLVRIDRYPTSPWPTDPAFRRQVFQLVDIAFGQRRKTCRNAFVDWAGSGNESADRLLAASIDPARRGETLSIDDFVRLLQRSADRGGSDREGTSPPTAGQGAPAC.

Positions 40, 42, 67, 88, 118, and 137 each coordinate S-adenosyl-L-methionine. Basic and acidic residues predominate over residues 296–305 (ADRGGSDREG). The segment at 296–318 (ADRGGSDREGTSPPTAGQGAPAC) is disordered.

This sequence belongs to the class I-like SAM-binding methyltransferase superfamily. rRNA adenine N(6)-methyltransferase family. RsmA subfamily.

It localises to the cytoplasm. It carries out the reaction adenosine(1518)/adenosine(1519) in 16S rRNA + 4 S-adenosyl-L-methionine = N(6)-dimethyladenosine(1518)/N(6)-dimethyladenosine(1519) in 16S rRNA + 4 S-adenosyl-L-homocysteine + 4 H(+). Functionally, specifically dimethylates two adjacent adenosines (A1518 and A1519) in the loop of a conserved hairpin near the 3'-end of 16S rRNA in the 30S particle. May play a critical role in biogenesis of 30S subunits. The polypeptide is Ribosomal RNA small subunit methyltransferase A (Mycobacterium avium (strain 104)).